The chain runs to 229 residues: Platelet-activating factor acetylhydrolase IB subunit alpha2 (229 aa).

At Ser2 the chain carries N-acetylserine. The residue at position 2 (Ser2) is a Phosphoserine. Ser48 is a catalytic residue. At Ser64 the chain carries Phosphoserine. Active-site residues include Asp193 and His196. Thr220 carries the post-translational modification Phosphothreonine.

This sequence belongs to the 'GDSL' lipolytic enzyme family. Platelet-activating factor acetylhydrolase IB beta/gamma subunits subfamily. In terms of assembly, forms a catalytic dimer which is either homodimer (alpha2/alpha2 homodimer) or heterodimer with PAFAH1B3 (alpha2/alpha1 heterodimer). Component of the cytosolic (PAF-AH (I)) heterotetrameric enzyme, which is composed of PAFAH1B1 (beta), PAFAH1B2 (alpha2) and PAFAH1B3 (alpha1) subunits. The catalytic activity of the enzyme resides in the alpha1 (PAFAH1B3) and alpha2 (PAFAH1B2) subunits, whereas the beta subunit (PAFAH1B1) has regulatory activity. Trimer formation is not essential for the catalytic activity. Interacts (homodimer form) with PAFAH1B1 (homodimer form); PAFAH1B2 competes with NDEL1 for PAFAH1B1 binding. Interacts with VLDLR; this interaction may modulate the Reelin pathway.

The protein localises to the cytoplasm. The enzyme catalyses a 1-O-alkyl-2-acetyl-sn-glycero-3-phosphocholine + H2O = a 1-O-alkyl-sn-glycero-3-phosphocholine + acetate + H(+). It catalyses the reaction 1-O-hexadecyl-2-acetyl-sn-glycero-3-phosphocholine + H2O = 1-O-hexadecyl-sn-glycero-3-phosphocholine + acetate + H(+). The catalysed reaction is 1-O-hexadecyl-2-acetyl-sn-glycero-3-phosphate + H2O = 1-O-hexadecyl-sn-glycero-3-phosphate + acetate + H(+). It carries out the reaction 1-O-hexadecyl-2-acetyl-sn-glycero-3-phosphoethanolamine + H2O = 1-O-hexadecyl-sn-glycero-3-phosphoethanolamine + acetate + H(+). Its activity is regulated as follows. Beta subunit (PAFAH1B1) stimulates the acetylhydrolase activity of the alpha2/alpha2 catalytic homodimer. Alpha2 catalytic subunit of the cytosolic type I platelet-activating factor (PAF) acetylhydrolase (PAF-AH (I)) heterotetrameric enzyme that catalyzes the hydrolyze of the acetyl group at the sn-2 position of PAF and its analogs and modulates the action of PAF. The activity and substrate specificity of PAF-AH (I) are affected by its subunit composition. The alpha2/alpha2 homodimer (PAFAH1B2/PAFAH1B2 homodimer) hydrolyzes PAF and 1-O-alkyl-2-acetyl-sn-glycero-3-phosphorylethanolamine (AAGPE) more efficiently than 1-O-alkyl-2-acetyl-sn-glycero-3-phosphoric acid (AAGPA). In contrast, the alpha1/alpha2 heterodimer(PAFAH1B3/PAFAH1B3 heterodimer) hydrolyzes AAGPA more efficiently than PAF, but has little hydrolytic activity towards AAGPE. May play a role in male germ cell meiosis during the late pachytenestage and meiotic divisions as well as early spermiogenesis. The polypeptide is Platelet-activating factor acetylhydrolase IB subunit alpha2 (Mus musculus (Mouse)).